A 295-amino-acid chain; its full sequence is Acetylglutamate kinase (295 aa).

Residues 66-67, Arg88, and Asn193 each bind substrate; that span reads GG.

The protein belongs to the acetylglutamate kinase family. ArgB subfamily.

It localises to the cytoplasm. It catalyses the reaction N-acetyl-L-glutamate + ATP = N-acetyl-L-glutamyl 5-phosphate + ADP. It functions in the pathway amino-acid biosynthesis; L-arginine biosynthesis; N(2)-acetyl-L-ornithine from L-glutamate: step 2/4. Functionally, catalyzes the ATP-dependent phosphorylation of N-acetyl-L-glutamate. This Rhizobium leguminosarum bv. trifolii (strain WSM2304) protein is Acetylglutamate kinase.